The following is a 470-amino-acid chain: Transcription factor SOX-8 (470 aa).

Over residues 1-12 (MLNMTEEHDKAL) the composition is skewed to basic and acidic residues. Residues 1–60 (MLNMTEEHDKALEAPCSPAGTTSSMSHVDSDSDSPLSPAGSEGLGCAPAPAPRPPGAAPL) form a disordered region. The tract at residues 67–107 (AEVDERFPACIRDAVSQVLKGYDWSLVPMPVRGNGSLKAKP) is dimerization (DIM). A DNA-binding region (HMG box) is located at residues 109 to 177 (VKRPMNAFMV…QHKKDHPDYK (69 aa)). Basic and acidic residues-rich tracts occupy residues 163–178 (ERLRVQHKKDHPDYKY), 219–228 (DGHHHGEHAG), and 242–257 (TDLHHGSKQELKHEGR). 2 disordered regions span residues 163 to 257 (ERLR…HEGR) and 327 to 381 (AGGA…DYGS). Residues 233–308 (PPTPPTTPKT…LNGHTAMPAD (76 aa)) are transactivation domain (TAM). Positions 338–349 (SPASASPSSADS) are enriched in low complexity. The interval 353–470 (RPHIKTEQLS…QPVYTTLTRP (118 aa)) is transactivation domain (TAC). The segment covering 359–372 (EQLSPSHYSDQSHG) has biased composition (polar residues). The short motif at 424-432 (SSIYQYPYF) is the 9aaTAD element.

In terms of tissue distribution, widely expressed in the embryo.

The protein resides in the nucleus. Transcription factor that may play a role in central nervous system, limb and facial development. May be involved in male sex determination. Binds the consensus motif 5'-[AT][AT]CAA[AT]G-3'. The sequence is that of Transcription factor SOX-8 (SOX8) from Gallus gallus (Chicken).